Here is a 166-residue protein sequence, read N- to C-terminus: Cytochrome c-type biogenesis protein CcmE (166 aa).

At 1–7 the chain is on the cytoplasmic side; that stretch reads MTRKQKR. The helical; Signal-anchor for type II membrane protein transmembrane segment at 8–28 threads the bilayer; the sequence is LALIASGAVVVSLAVGLVMFA. Over 29 to 166 the chain is Periplasmic; it reads LRDNIVFFYS…QTAPQGAQAY (138 aa). 2 residues coordinate heme: H122 and Y126. Residues 139–166 form a disordered region; sequence GVWQEEGKSEGKPSAIPAQTAPQGAQAY.

It belongs to the CcmE/CycJ family.

The protein resides in the cell inner membrane. In terms of biological role, heme chaperone required for the biogenesis of c-type cytochromes. Transiently binds heme delivered by CcmC and transfers the heme to apo-cytochromes in a process facilitated by CcmF and CcmH. This is Cytochrome c-type biogenesis protein CcmE from Methylocella silvestris (strain DSM 15510 / CIP 108128 / LMG 27833 / NCIMB 13906 / BL2).